The following is a 738-amino-acid chain: Probable trehalase (738 aa).

A disordered region spans residues Met1 to Thr44. Substrate contacts are provided by residues Arg289, Trp296–Asp297, Asn333, Arg342, Arg342–Gln344, and Gly463. Active-site proton donor/acceptor residues include Asp465 and Glu660.

Belongs to the glycosyl hydrolase 37 family.

The catalysed reaction is alpha,alpha-trehalose + H2O = alpha-D-glucose + beta-D-glucose. This Eremothecium gossypii (strain ATCC 10895 / CBS 109.51 / FGSC 9923 / NRRL Y-1056) (Yeast) protein is Probable trehalase (NTH2).